We begin with the raw amino-acid sequence, 110 residues long: MFNFGNLAELMKQAQSIKENVEKAKEELKNEKIVVEVGGGMVKVVSDGLGTVLDLEIDKSLLNENEYPVLKDLLIAAINEVSERSKEVVADKISQATGLPMNMSKFGGMF.

The protein belongs to the YbaB/EbfC family. As to quaternary structure, homodimer.

It is found in the cytoplasm. The protein localises to the nucleoid. In terms of biological role, binds to DNA and alters its conformation. May be involved in regulation of gene expression, nucleoid organization and DNA protection. The protein is Nucleoid-associated protein SYO3AOP1_1366 of Sulfurihydrogenibium sp. (strain YO3AOP1).